Here is a 401-residue protein sequence, read N- to C-terminus: Phosphonopyruvate decarboxylase (401 aa).

The disordered stretch occupies residues 382-401 (WPASAVGSGTRAAAGSAGDR). Low complexity predominate over residues 384–401 (ASAVGSGTRAAAGSAGDR).

It belongs to the TPP enzyme family. Thiamine diphosphate is required as a cofactor. The cofactor is Mg(2+).

The catalysed reaction is 3-phosphonopyruvate + H(+) = phosphonoacetaldehyde + CO2. It functions in the pathway secondary metabolite biosynthesis; bialaphos biosynthesis. In terms of biological role, involved in the biosynthesis of phosphinothricin tripeptide (PTT), also known as bialaphos (BA), a natural-product antibiotic and potent herbicide. Catalyzes the decarboxylation of phosphonopyruvate (PnPy) to generate phosphonoacetaldehyde (PnAA). The polypeptide is Phosphonopyruvate decarboxylase (Streptomyces hygroscopicus).